Here is a 163-residue protein sequence, read N- to C-terminus: Centrosomal protein of 19 kDa (163 aa).

This sequence belongs to the CEP19 family. As to quaternary structure, interacts with CEP43; this interaction is required for its localization to the mother centriole. Interacts (via residues 121-150) with RABL2B. Interacts (via C-terminus) with CEP350; this interaction is required for its localization to the mother centriole.

The protein resides in the cytoplasm. The protein localises to the cytoskeleton. It is found in the microtubule organizing center. Its subcellular location is the centrosome. It localises to the centriole. The protein resides in the spindle pole. The protein localises to the cilium basal body. Its function is as follows. Required for ciliation. Recruits the RABL2B GTPase to the ciliary base to initiate ciliation. After specifically capturing the activated GTP-bound RABL2B, the CEP19-RABL2B complex binds intraflagellar transport (IFT) complex B from the large pool pre-docked at the base of the cilium and thus triggers its entry into the cilia. Involved in the early steps in cilia formation by recruiting the ciliary vesicles (CVs) to the distal end of the mother centriole where they fuse to initiate cilium assembly. Involved in microtubule (MT) anchoring to the centrosomes. This chain is Centrosomal protein of 19 kDa (CEP19), found in Homo sapiens (Human).